Here is a 113-residue protein sequence, read N- to C-terminus: MKQATRKPTTPGDILLYEYLEPLDLKINELAELLHVHRNSVSALINNNRKLTTEMAFRLAKVFDTTVDFWLNLQAAVDLWEVENNMRTQEELGRIETVAEYLARREERAKKVA.

Positions 16–70 constitute an HTH cro/C1-type domain; it reads LYEYLEPLDLKINELAELLHVHRNSVSALINNNRKLTTEMAFRLAKVFDTTVDFW. Positions 27 to 46 form a DNA-binding region, H-T-H motif; the sequence is INELAELLHVHRNSVSALIN.

This sequence belongs to the VapA/VapI family.

This is an uncharacterized protein from Escherichia coli O6:H1 (strain CFT073 / ATCC 700928 / UPEC).